The following is a 235-amino-acid chain: 2-C-methyl-D-erythritol 4-phosphate cytidylyltransferase (235 aa).

The protein belongs to the IspD/TarI cytidylyltransferase family. IspD subfamily. Homodimer.

It carries out the reaction 2-C-methyl-D-erythritol 4-phosphate + CTP + H(+) = 4-CDP-2-C-methyl-D-erythritol + diphosphate. Its pathway is isoprenoid biosynthesis; isopentenyl diphosphate biosynthesis via DXP pathway; isopentenyl diphosphate from 1-deoxy-D-xylulose 5-phosphate: step 2/6. Catalyzes the formation of 4-diphosphocytidyl-2-C-methyl-D-erythritol from CTP and 2-C-methyl-D-erythritol 4-phosphate (MEP). This chain is 2-C-methyl-D-erythritol 4-phosphate cytidylyltransferase, found in Serratia proteamaculans (strain 568).